Consider the following 243-residue polypeptide: NAD-dependent protein deacylase (243 aa).

Residues 1 to 234 (MYQHIVVLTG…PKLVDTILAG (234 aa)) enclose the Deacetylase sirtuin-type domain. 10–29 (GAGISAESGLRTFRDQDGLW) is a binding site for NAD(+). Substrate contacts are provided by tyrosine 54 and arginine 57. 91-94 (QNID) is a binding site for NAD(+). The active-site Proton acceptor is histidine 109. The Zn(2+) site is built by cysteine 117 and cysteine 136. Residues 176–178 (GTS), 202–204 (NLQ), and alanine 220 each bind NAD(+).

It belongs to the sirtuin family. Class III subfamily. Zn(2+) is required as a cofactor.

It is found in the cytoplasm. It catalyses the reaction N(6)-acetyl-L-lysyl-[protein] + NAD(+) + H2O = 2''-O-acetyl-ADP-D-ribose + nicotinamide + L-lysyl-[protein]. The enzyme catalyses N(6)-succinyl-L-lysyl-[protein] + NAD(+) + H2O = 2''-O-succinyl-ADP-D-ribose + nicotinamide + L-lysyl-[protein]. Its function is as follows. NAD-dependent lysine deacetylase and desuccinylase that specifically removes acetyl and succinyl groups on target proteins. Modulates the activities of several proteins which are inactive in their acylated form. This Shewanella oneidensis (strain ATCC 700550 / JCM 31522 / CIP 106686 / LMG 19005 / NCIMB 14063 / MR-1) protein is NAD-dependent protein deacylase.